The sequence spans 1146 residues: Lysine-specific demethylase 2A (1146 aa).

The 169-residue stretch at F146–D314 folds into the JmjC domain. T207 serves as a coordination point for substrate. Residues H210 and D212 each coordinate Fe cation. Residue K227 coordinates substrate. H282 is a binding site for Fe cation. Disordered regions lie at residues L363–P467 and T554–A585. The span at S373–S387 shows a compositional bias: low complexity. The span at D388–E401 shows a compositional bias: acidic residues. The span at G402–I442 shows a compositional bias: basic and acidic residues. The span at L453–P467 shows a compositional bias: pro residues. Over residues S566–G584 the composition is skewed to low complexity. The CXXC-type zinc finger occupies A585–L631. 8 residues coordinate Zn(2+): C592, C595, C598, C603, C606, C609, C625, and C630. A PHD-type zinc finger spans residues S638–G699. 2 disordered regions span residues V733–R800 and T832–M867. Over residues G739–P762 the composition is skewed to pro residues. Positions S772–H789 are enriched in basic and acidic residues. The segment covering E849–E864 has biased composition (acidic residues). Positions S874–V919 constitute an F-box domain. 6 LRR repeats span residues W945 to L966, L968 to W994, G1032 to H1057, C1058 to G1087, C1088 to G1112, and C1113 to D1138.

It belongs to the JHDM1 histone demethylase family. Fe(2+) is required as a cofactor.

It is found in the nucleus. Its subcellular location is the nucleoplasm. It catalyses the reaction N(6),N(6)-dimethyl-L-lysyl(36)-[histone H3] + 2 2-oxoglutarate + 2 O2 = L-lysyl(36)-[histone H3] + 2 formaldehyde + 2 succinate + 2 CO2. Its function is as follows. Histone demethylase that specifically demethylates 'Lys-36' of histone H3, thereby playing a central role in histone code. Preferentially demethylates dimethylated H3 'Lys-36' residue while it has weak or no activity for mono- and tri-methylated H3 'Lys-36'. May also recognize and bind to some phosphorylated proteins and promote their ubiquitination and degradation. Required to maintain the heterochromatic state. Associates with centromeres and represses transcription of small non-coding RNAs that are encoded by the clusters of satellite repeats at the centromere. Required to sustain centromeric integrity and genomic stability, particularly during mitosis. May play a role in the regulation of circadian gene expression. The sequence is that of Lysine-specific demethylase 2A (kdm2a) from Xenopus tropicalis (Western clawed frog).